Reading from the N-terminus, the 130-residue chain is B1 protein (130 aa).

Positions 1 to 12 are cleaved as a signal peptide; sequence LTSLILLVAVQA. 2 disulfide bridges follow: Cys-28-Cys-59 and Cys-99-Cys-116.

This sequence belongs to the PBP/GOBP family. Post-translationally, N-glycosylated. In terms of tissue distribution, tubular accessory sex gland.

The protein localises to the secreted. May be a carrier protein for lipids. The chain is B1 protein from Tenebrio molitor (Yellow mealworm beetle).